A 1080-amino-acid chain; its full sequence is Presequence protease 2, chloroplastic/mitochondrial (1080 aa).

Residues 1-84 (MLRSLTCSST…NGQFSRLSIR (84 aa)) constitute a chloroplast and mitochondrion transit peptide. H161 provides a ligand contact to Zn(2+). E164 serves as the catalytic Proton acceptor. H165 is a Zn(2+) binding site. The active site involves E239. E261 contacts Zn(2+). R704 lines the Mg(2+) pocket.

This sequence belongs to the peptidase M16 family. PreP subfamily. In terms of assembly, homodimer. Requires Zn(2+) as cofactor. It depends on Mg(2+) as a cofactor. In terms of tissue distribution, expressed in leaves, flowers and roots, but not detected in siliques and shoots.

It localises to the plastid. Its subcellular location is the chloroplast stroma. The protein localises to the mitochondrion matrix. Completely inhibited by the metal chelator orthophenanthroline. In terms of biological role, ATP-independent protease that degrades both mitochondrial and chloroplastic transit peptides after their cleavage. Also degrades other unstructured peptides. Specific for peptides in the range of 10 to 65 residues. Shows a preference for cleavage after small polar residues and before basic residues, but without any positional preference. In Arabidopsis thaliana (Mouse-ear cress), this protein is Presequence protease 2, chloroplastic/mitochondrial (PREP2).